The chain runs to 1121 residues: Phosphatidylinositol 4-kinase beta 1 (1121 aa).

The 143-residue stretch at 1–143 (MPMGRFLSLV…SRIQEKCQIA (143 aa)) folds into the PIK helical domain. The span at 187–207 (PPTQKSLSFSPSPGTNVQDDG) shows a compositional bias: polar residues. The segment at 187–210 (PPTQKSLSFSPSPGTNVQDDGSQL) is disordered. 9 consecutive repeat copies span residues 212–231 (AEDN…RDAL), 244–263 (SEKE…EGDE), 266–285 (PNSE…EDED), 288–306 (NSSE…ESEE), 309–328 (SSSD…DEEE), 331–350 (ANSD…EDEE), 353–372 (PNSE…EDDK), 380–398 (EDKD…DDKR), and 420–438 (DERE…DDKK). The segment at 212–508 (AEDNKIFKKL…FRDRDQSVED (297 aa)) is 11 X 20 AA approximate repeats (PPC). 4 disordered regions span residues 343 to 421 (ESKN…EEDE), 435 to 489 (DDKK…ESSP), 506 to 544 (VEDS…NTAS), and 794 to 825 (AAAA…NGGM). Composition is skewed to basic and acidic residues over residues 358–376 (FFKK…VPKE), 383–405 (DGFL…EKNE), 412–421 (ADKKSGEEDE), and 435–445 (DDKKDIVKVDD). The span at 446–455 (GNESEGDESP) shows a compositional bias: acidic residues. Residues serine 449 and serine 454 each carry the phosphoserine modification. Repeat copies occupy residues 454–472 (SPEF…EDAK) and 489–508 (PGTE…SVED). The segment covering 466–475 (IHPEDAKPTS) has biased composition (basic and acidic residues). The segment covering 476-489 (ENENSSNGLVESSP) has biased composition (polar residues). Positions 835–1106 (ELWEGKRDRI…LISSSLDAWR (272 aa)) constitute a PI3K/PI4K catalytic domain. The tract at residues 841 to 847 (RDRIRKA) is G-loop. The segment at 969-977 (QVKDRHNGN) is catalytic loop. Residues 988–1012 (HIDFGFMLSNSPGGVNFESAPFKLT) form an activation loop region.

It belongs to the PI3/PI4-kinase family. Type III PI4K subfamily. Interacts with AHK2, CBL1 and RABA4D. As to expression, expressed constitutively in leaves, roots, flowers, and stems.

It localises to the cell membrane. The protein resides in the golgi apparatus. The protein localises to the trans-Golgi network. Its subcellular location is the cytoplasmic vesicle membrane. It catalyses the reaction a 1,2-diacyl-sn-glycero-3-phospho-(1D-myo-inositol) + ATP = a 1,2-diacyl-sn-glycero-3-phospho-(1D-myo-inositol 4-phosphate) + ADP + H(+). With respect to regulation, stimulated by phosphatidylinositol 4-phosphate (PtdIns4P). Slightly repressed by phosphatidyl-choline (PtdCho), wortmannin and adenosine. Acts on phosphatidylinositol (PtdIns) in the first committed step in the production of the second messenger inositol-1,4,5-trisphosphate. Necessary for proper organization of the trans-Golgi network (TGN) and post-Golgi secretion in root hairs. Together with PI4KB2, required during polarized root hair expansion and pollen tube elongation. Functions redundantly with PI4KB2 upstream of the cold response phosphoinositide-dependent phospholipase C (PI-PLC) pathway. The polypeptide is Phosphatidylinositol 4-kinase beta 1 (Arabidopsis thaliana (Mouse-ear cress)).